Consider the following 689-residue polypeptide: Glycine--tRNA ligase beta subunit (689 aa).

It belongs to the class-II aminoacyl-tRNA synthetase family. In terms of assembly, tetramer of two alpha and two beta subunits.

Its subcellular location is the cytoplasm. The catalysed reaction is tRNA(Gly) + glycine + ATP = glycyl-tRNA(Gly) + AMP + diphosphate. The polypeptide is Glycine--tRNA ligase beta subunit (Salmonella agona (strain SL483)).